A 523-amino-acid chain; its full sequence is Bifunctional purine biosynthesis protein PurH (523 aa).

The 154-residue stretch at 1–154 (MTATAGSNKR…KNHPSVAVVT (154 aa)) folds into the MGS-like domain.

This sequence belongs to the PurH family.

It carries out the reaction (6R)-10-formyltetrahydrofolate + 5-amino-1-(5-phospho-beta-D-ribosyl)imidazole-4-carboxamide = 5-formamido-1-(5-phospho-D-ribosyl)imidazole-4-carboxamide + (6S)-5,6,7,8-tetrahydrofolate. The catalysed reaction is IMP + H2O = 5-formamido-1-(5-phospho-D-ribosyl)imidazole-4-carboxamide. It functions in the pathway purine metabolism; IMP biosynthesis via de novo pathway; 5-formamido-1-(5-phospho-D-ribosyl)imidazole-4-carboxamide from 5-amino-1-(5-phospho-D-ribosyl)imidazole-4-carboxamide (10-formyl THF route): step 1/1. The protein operates within purine metabolism; IMP biosynthesis via de novo pathway; IMP from 5-formamido-1-(5-phospho-D-ribosyl)imidazole-4-carboxamide: step 1/1. The polypeptide is Bifunctional purine biosynthesis protein PurH (Streptomyces coelicolor (strain ATCC BAA-471 / A3(2) / M145)).